Here is a 321-residue protein sequence, read N- to C-terminus: Ubiquinone biosynthesis O-methyltransferase, mitochondrial (321 aa).

S-adenosyl-L-methionine-binding residues include arginine 102, glycine 135, aspartate 157, and leucine 210. Residues glutamate 211, glutamate 214, and histidine 215 each coordinate Mg(2+).

This sequence belongs to the class I-like SAM-binding methyltransferase superfamily. UbiG/COQ3 family. Component of a multi-subunit COQ enzyme complex. The cofactor is Mg(2+).

The protein resides in the mitochondrion inner membrane. The enzyme catalyses a 3,4-dihydroxy-5-(all-trans-polyprenyl)benzoate + S-adenosyl-L-methionine = a 4-hydroxy-3-methoxy-5-(all-trans-polyprenyl)benzoate + S-adenosyl-L-homocysteine + H(+). It carries out the reaction a 3-demethylubiquinone + S-adenosyl-L-methionine = a ubiquinone + S-adenosyl-L-homocysteine. The catalysed reaction is a 3-demethylubiquinol + S-adenosyl-L-methionine = a ubiquinol + S-adenosyl-L-homocysteine + H(+). The protein operates within cofactor biosynthesis; ubiquinone biosynthesis. O-methyltransferase required for two non-consecutive steps during ubiquinone biosynthesis. Catalyzes the 2 O-methylation of 3,4-dihydroxy-5-(all-trans-polyprenyl)benzoic acid into 4-hydroxy-3-methoxy-5-(all-trans-polyprenyl)benzoic acid. Also catalyzes the last step of ubiquinone biosynthesis by mediating methylation of 3-demethylubiquinone into ubiquinone. Also able to mediate the methylation of 3-demethylubiquinol into ubiquinol. This chain is Ubiquinone biosynthesis O-methyltransferase, mitochondrial, found in Dictyostelium discoideum (Social amoeba).